The chain runs to 493 residues: Putative lon protease homolog (493 aa).

Residue 52–59 (GPPGVGKS) participates in ATP binding.

Belongs to the peptidase S16 family.

This chain is Putative lon protease homolog, found in Thermoplasma acidophilum (strain ATCC 25905 / DSM 1728 / JCM 9062 / NBRC 15155 / AMRC-C165).